A 140-amino-acid chain; its full sequence is Ribosome maturation factor RimP (140 aa).

This sequence belongs to the RimP family.

The protein resides in the cytoplasm. Functionally, required for maturation of 30S ribosomal subunits. The protein is Ribosome maturation factor RimP of Campylobacter jejuni subsp. jejuni serotype O:23/36 (strain 81-176).